The sequence spans 367 residues: Inhibin alpha chain (367 aa).

The first 20 residues, 1 to 20 (MVPPLPLLLLLLLVPQGGHG), serve as a signal peptide directing secretion. Positions 21 to 63 (CQGSELDREIVLAKVRALFLDALGPPAVTGEGGDPGVRRLPRR) are excised as a propeptide. The propeptide at 64–233 (HALGGFARRG…PPSGGERTRR (170 aa)) is inhibin alpha N-terminal region. N-linked (GlcNAc...) asparagine glycans are attached at residues asparagine 147 and asparagine 269. Disulfide bonds link cysteine 263-cysteine 329, cysteine 292-cysteine 364, and cysteine 296-cysteine 366.

Belongs to the TGF-beta family. As to quaternary structure, dimeric, linked by one or more disulfide bonds. Activin B is a dimer of alpha and beta-B. Inhibin A is a dimer of alpha and beta-A. Inhibin B is a dimer of alpha and beta-B. Interacts with TGFBR3L; this interaction regulates female fertility. Proteolytic processing yields a number of bioactive forms, consisting either solely of the mature alpha chain, of the most N-terminal propeptide linked through a disulfide bond to the mature alpha chain, or of the entire proprotein.

The protein resides in the secreted. Functionally, inhibins and activins inhibit and activate, respectively, the secretion of follitropin by the pituitary gland. Inhibins/activins are involved in regulating a number of diverse functions such as hypothalamic and pituitary hormone secretion, gonadal hormone secretion, germ cell development and maturation, erythroid differentiation, insulin secretion, nerve cell survival, embryonic axial development or bone growth, depending on their subunit composition. Inhibins appear to oppose the functions of activins. Inhibin A is a dimer of alpha/INHA and beta-A/INHBA that functions as a feedback regulator in the hypothalamic-pituitary-gonadal (HPG) axis. Inhibits the secretion of FSH from the anterior pituitary gland by acting on pituitary gonadotrope cells. Antagonizes activin A by binding to the proteoglycan, betaglycan, and forming a stable complex with and, thereby, sequestering type II activin receptors while excluding type I receptor. Its function is as follows. Inhibin B is a dimer of alpha and beta-B that plays a crucial role in the regulation of the reproductive system by inhibiting the secretion of follicle-stimulating hormone (FSH) from the anterior pituitary gland. Thereby, maintains reproductive homeostasis in both males and females. Acts as a more potent suppressor of FSH release than inhibin A. Functions as competitive receptor antagonist binding activin type II receptors with high affinity in the presence of the TGF-beta type III coreceptor/TGFBR3L. The protein is Inhibin alpha chain (INHA) of Equus caballus (Horse).